The chain runs to 247 residues: Agamous-like MADS-box protein FUL-L (247 aa).

In terms of domain architecture, MADS-box spans 1–61; the sequence is MGRGRVQLKR…GKLFEYSSDS (61 aa). Residues 88-178 enclose the K-box domain; it reads QGNWSMDYPK…AKKVKEKEKV (91 aa). The tract at residues 224–247 is disordered; sequence EDGAEARPSPNTLMPPWMLRHVNE.

In terms of tissue distribution, expressed in tendrils and flowers.

The protein resides in the nucleus. In terms of biological role, probable transcription factor involved in flower development. The sequence is that of Agamous-like MADS-box protein FUL-L from Vitis vinifera (Grape).